We begin with the raw amino-acid sequence, 893 residues long: DNA mismatch repair protein MutS (893 aa).

Residue 638–645 participates in ATP binding; it reads GPNMAGKS.

It belongs to the DNA mismatch repair MutS family.

Its function is as follows. This protein is involved in the repair of mismatches in DNA. It is possible that it carries out the mismatch recognition step. This protein has a weak ATPase activity. The polypeptide is DNA mismatch repair protein MutS (Lawsonia intracellularis (strain PHE/MN1-00)).